Reading from the N-terminus, the 499-residue chain is L-arabinose isomerase (499 aa).

The Mn(2+) site is built by E306, E333, H350, and H449.

It belongs to the arabinose isomerase family. It depends on Mn(2+) as a cofactor.

The catalysed reaction is beta-L-arabinopyranose = L-ribulose. It participates in carbohydrate degradation; L-arabinose degradation via L-ribulose; D-xylulose 5-phosphate from L-arabinose (bacterial route): step 1/3. Catalyzes the conversion of L-arabinose to L-ribulose. This Aeromonas hydrophila subsp. hydrophila (strain ATCC 7966 / DSM 30187 / BCRC 13018 / CCUG 14551 / JCM 1027 / KCTC 2358 / NCIMB 9240 / NCTC 8049) protein is L-arabinose isomerase.